A 528-amino-acid chain; its full sequence is Cytochrome b5 reductase 4 (528 aa).

Methionine 1 carries the N-acetylmethionine modification. A disordered region spans residues 1 to 29 (MLNVPSQAFPAPGSQQRVSSQGRSKVPLK). Residues 13 to 24 (GSQQRVSSQGRS) show a composition bias toward low complexity. The Cytochrome b5 heme-binding domain maps to 54-130 (LIEVTEEELK…LKECLVGRMA (77 aa)). Heme-binding residues include histidine 89 and histidine 112. One can recognise a CS domain in the interval 172 to 263 (LSSPSYDWFQ…KESVSWQCLG (92 aa)). The region spanning 280–392 (LYYRRCQLIS…SGPEGDFKVS (113 aa)) is the FAD-binding FR-type domain. Residues 372 to 387 (DRLQIGDFISVSGPEG) and 399 to 431 (DLFLLAAGTGFTPMVTVLNYALSHMSSLRKVKL) each bind FAD.

The protein belongs to the flavoprotein pyridine nucleotide cytochrome reductase family. FAD serves as cofactor. As to expression, ubiquitously expressed. Isoform 2 is expressed in testis, brain, skeletal muscle and in the male germline.

The protein resides in the endoplasmic reticulum. It carries out the reaction 2 Fe(III)-[cytochrome b5] + NADH = 2 Fe(II)-[cytochrome b5] + NAD(+) + H(+). Its function is as follows. NADH-cytochrome b5 reductase involved in endoplasmic reticulum stress response pathway. Plays a critical role in protecting pancreatic beta-cells against oxidant stress, possibly by protecting the cell from excess buildup of reactive oxygen species (ROS). This is Cytochrome b5 reductase 4 (Cyb5r4) from Mus musculus (Mouse).